Here is a 490-residue protein sequence, read N- to C-terminus: Probable cytosol aminopeptidase (490 aa).

Positions 260 and 265 each coordinate Mn(2+). Lys-272 is a catalytic residue. 3 residues coordinate Mn(2+): Asp-284, Asp-343, and Glu-345. Arg-347 is an active-site residue.

It belongs to the peptidase M17 family. It depends on Mn(2+) as a cofactor.

The protein localises to the cytoplasm. It carries out the reaction Release of an N-terminal amino acid, Xaa-|-Yaa-, in which Xaa is preferably Leu, but may be other amino acids including Pro although not Arg or Lys, and Yaa may be Pro. Amino acid amides and methyl esters are also readily hydrolyzed, but rates on arylamides are exceedingly low.. The enzyme catalyses Release of an N-terminal amino acid, preferentially leucine, but not glutamic or aspartic acids.. Its function is as follows. Presumably involved in the processing and regular turnover of intracellular proteins. Catalyzes the removal of unsubstituted N-terminal amino acids from various peptides. This chain is Probable cytosol aminopeptidase, found in Gloeothece citriformis (strain PCC 7424) (Cyanothece sp. (strain PCC 7424)).